A 345-amino-acid polypeptide reads, in one-letter code: Tyrosine-binding protein (345 aa).

The signal sequence occupies residues Met1 to Gly23. Cys24 carries N-palmitoyl cysteine lipidation. The S-diacylglycerol cysteine moiety is linked to residue Cys24.

The complex is probably composed of two ATP-binding proteins (CDR20291_0806), two transmembrane proteins (CDR20291_0807) and a solute-binding protein (CDR20291_0805).

The protein localises to the cell membrane. In terms of biological role, probably part of an ABC transporter complex involved in tyrosine uptake. May also import phenylalanine. The chain is Tyrosine-binding protein from Clostridioides difficile (strain R20291) (Peptoclostridium difficile).